The chain runs to 162 residues: Caveolin-2 (162 aa).

The Cytoplasmic portion of the chain corresponds to 1 to 86 (MGLETEKADV…FEMSKYVIYK (86 aa)). Residue tyrosine 19 is modified to Phosphotyrosine; by SRC. Phosphoserine occurs at positions 20 and 23. Tyrosine 27 is subject to Phosphotyrosine; by SRC. Positions 87-107 (FLTVFLAIPLAFAAGILFATL) form an intramembrane region, helical. Topologically, residues 108 to 162 (SCLHIWIIMPFVKTCLMVLPSVQTIWKSVTDVVIAPLCTSIGRSFSSVSLQLSHD) are cytoplasmic.

This sequence belongs to the caveolin family. Monomer or homodimer. Interacts with CAV1; the interaction forms a stable heterooligomeric complex that is required for targeting to lipid rafts and for caveolae formation. Tyrosine phosphorylated forms do not form heterooligomers with the Tyr-19-phosphorylated form existing as a monomer or dimer, and the Tyr-27-form as a monomer only. Interacts (tyrosine phosphorylated form) with the SH2 domain-containing proteins, RASA1, NCK1 and SRC. Interacts (tyrosine phosphorylated form) with INSR, the interaction (Tyr-27-phosphorylated form) is increased on insulin stimulation. Interacts (Tyr-19 phosphorylated form) with MAPK1 (phosphorylated form); the interaction, promoted by insulin, leads to nuclear location and MAPK1 activation. Interacts with STAT3; the interaction is increased on insulin-induced tyrosine phosphorylation leading to STAT activation. Phosphorylated on serine and tyrosine residues. CAV1 promotes phosphorylation on Ser-23 which then targets the complex to the plasma membrane, lipid rafts and caveolae. Phosphorylation on both Tyr-19 and Tyr-27 is required for insulin-induced 'Ser-727' phosphorylation of STAT3 and its activation. Phosphorylation on Tyr-19 is required for insulin-induced phosphorylation of MAPK1 and DNA binding of STAT3. Tyrosine phosphorylation is induced by both EGF and insulin. Expressed in aortic endothelial cells.

Its subcellular location is the nucleus. It localises to the cytoplasm. It is found in the golgi apparatus membrane. The protein resides in the cell membrane. The protein localises to the membrane. Its subcellular location is the caveola. In terms of biological role, may act as a scaffolding protein within caveolar membranes. Interacts directly with G-protein alpha subunits and can functionally regulate their activity. Acts as an accessory protein in conjunction with CAV1 in targeting to lipid rafts and driving caveolae formation. Positive regulator of cellular mitogenesis of the MAPK signaling pathway. Required for the insulin-stimulated nuclear translocation and activation of MAPK1 and STAT3, and the subsequent regulation of cell cycle progression. This is Caveolin-2 (CAV2) from Bos taurus (Bovine).